A 283-amino-acid polypeptide reads, in one-letter code: Cuticle collagen 49 (283 aa).

A signal peptide spans 1-19; that stretch reads MWKFVIGSVSTAAFFVSVC. The tract at residues 90-283 is disordered; that stretch reads EPTKNCPAGP…GYCTCPPRTA (194 aa). Over residues 127-139 the composition is skewed to basic and acidic residues; it reads VVIHDMPNPKECI. Over residues 143–155 the composition is skewed to pro residues; that stretch reads AGPPGPPGPPGPL. Low complexity predominate over residues 185–204; that stretch reads QGPPGSAGRAGPRGQAGQPG. Residues 213 to 271 enclose the Collagen-like domain; that stretch reads GRPGPQGPLGEPGAQGEPGVDGKDGALGAPGRKAENGRPGKRGKDGVAGVPGTRGKEGE. Residues 244–257 are compositionally biased toward basic and acidic residues; the sequence is RKAENGRPGKRGKD.

It belongs to the cuticular collagen family. Collagen polypeptide chains are complexed within the cuticle by disulfide bonds and other types of covalent cross-links.

Its function is as follows. Probable cuticular collagen-like protein. Nematode cuticles are composed largely of collagen-like proteins. The cuticle functions both as an exoskeleton and as a barrier to protect the worm from its environment. Acts downstream of the Wnt signaling pathway, perhaps in the formation of the adult cuticle. The polypeptide is Cuticle collagen 49 (Caenorhabditis elegans).